Reading from the N-terminus, the 61-residue chain is MSEKKIKITQVRSIIGGTRKQKATIQALGLGRPNYSVEKKDNACTKGQIRVVQHLVKVEEV.

This sequence belongs to the universal ribosomal protein uL30 family. In terms of assembly, part of the 50S ribosomal subunit.

The sequence is that of Large ribosomal subunit protein uL30 from Chlorobium phaeovibrioides (strain DSM 265 / 1930) (Prosthecochloris vibrioformis (strain DSM 265)).